The following is a 293-amino-acid chain: HTH-type transcriptional regulator ArgP (293 aa).

One can recognise an HTH lysR-type domain in the interval 4 to 60 (PDYRTLQALDAVIRERGFERAAQKLCITQSAVSQRIKQLENLFGQPLLVRTIPPHPT). Positions 21 to 40 (FERAAQKLCITQSAVSQRIK) form a DNA-binding region, H-T-H motif.

The protein belongs to the LysR transcriptional regulatory family. Homodimer.

Controls the transcription of genes involved in arginine and lysine metabolism. The chain is HTH-type transcriptional regulator ArgP from Sodalis glossinidius (strain morsitans).